Here is a 367-residue protein sequence, read N- to C-terminus: UDP-N-acetylglucosamine--N-acetylmuramyl-(pentapeptide) pyrophosphoryl-undecaprenol N-acetylglucosamine transferase (367 aa).

Residues 15–17 (TGG), Asn-127, Arg-163, Ser-191, Ile-249, and Gln-294 each bind UDP-N-acetyl-alpha-D-glucosamine.

The protein belongs to the glycosyltransferase 28 family. MurG subfamily.

It localises to the cell inner membrane. The enzyme catalyses di-trans,octa-cis-undecaprenyl diphospho-N-acetyl-alpha-D-muramoyl-L-alanyl-D-glutamyl-meso-2,6-diaminopimeloyl-D-alanyl-D-alanine + UDP-N-acetyl-alpha-D-glucosamine = di-trans,octa-cis-undecaprenyl diphospho-[N-acetyl-alpha-D-glucosaminyl-(1-&gt;4)]-N-acetyl-alpha-D-muramoyl-L-alanyl-D-glutamyl-meso-2,6-diaminopimeloyl-D-alanyl-D-alanine + UDP + H(+). Its pathway is cell wall biogenesis; peptidoglycan biosynthesis. Cell wall formation. Catalyzes the transfer of a GlcNAc subunit on undecaprenyl-pyrophosphoryl-MurNAc-pentapeptide (lipid intermediate I) to form undecaprenyl-pyrophosphoryl-MurNAc-(pentapeptide)GlcNAc (lipid intermediate II). This is UDP-N-acetylglucosamine--N-acetylmuramyl-(pentapeptide) pyrophosphoryl-undecaprenol N-acetylglucosamine transferase from Burkholderia lata (strain ATCC 17760 / DSM 23089 / LMG 22485 / NCIMB 9086 / R18194 / 383).